A 287-amino-acid polypeptide reads, in one-letter code: Bifunctional protein FolD 2 (287 aa).

NADP(+) is bound by residues 166 to 168 (GAS) and Ile-232.

Belongs to the tetrahydrofolate dehydrogenase/cyclohydrolase family. As to quaternary structure, homodimer.

The enzyme catalyses (6R)-5,10-methylene-5,6,7,8-tetrahydrofolate + NADP(+) = (6R)-5,10-methenyltetrahydrofolate + NADPH. It catalyses the reaction (6R)-5,10-methenyltetrahydrofolate + H2O = (6R)-10-formyltetrahydrofolate + H(+). The protein operates within one-carbon metabolism; tetrahydrofolate interconversion. Its function is as follows. Catalyzes the oxidation of 5,10-methylenetetrahydrofolate to 5,10-methenyltetrahydrofolate and then the hydrolysis of 5,10-methenyltetrahydrofolate to 10-formyltetrahydrofolate. The chain is Bifunctional protein FolD 2 from Hydrogenovibrio crunogenus (strain DSM 25203 / XCL-2) (Thiomicrospira crunogena).